A 250-amino-acid chain; its full sequence is MLIDWFTVFAQILNFVILLGLLRWFLYKPILQVMAKRQAQLAEQWQTATDLQAQAHQALEQYHQEQQSLQAQRASFLAAARAAADEERQRQLLTLREDIQAQREAWEADLHQEQRAFFHTLRQQVSQQVVAIARQALRDLANATLEQQVVARFCEQLQHLSPAQRQQINHLETPPEAVFIRTAFPLDVTHQAQIKQSLATTLELDGTPIHFVTVPELGCGIELKLAGQEIVWGLDPYLDQLEQTLAIATR.

Residues 2 to 22 (LIDWFTVFAQILNFVILLGLL) traverse the membrane as a helical segment.

The protein belongs to the ATPase B chain family. In terms of assembly, F-type ATPases have 2 components, F(1) - the catalytic core - and F(0) - the membrane proton channel. F(1) has five subunits: alpha(3), beta(3), gamma(1), delta(1), epsilon(1). F(0) has four main subunits: a(1), b(1), b'(1) and c(10-14). The alpha and beta chains form an alternating ring which encloses part of the gamma chain. F(1) is attached to F(0) by a central stalk formed by the gamma and epsilon chains, while a peripheral stalk is formed by the delta, b and b' chains.

Its subcellular location is the cellular thylakoid membrane. In terms of biological role, f(1)F(0) ATP synthase produces ATP from ADP in the presence of a proton or sodium gradient. F-type ATPases consist of two structural domains, F(1) containing the extramembraneous catalytic core and F(0) containing the membrane proton channel, linked together by a central stalk and a peripheral stalk. During catalysis, ATP synthesis in the catalytic domain of F(1) is coupled via a rotary mechanism of the central stalk subunits to proton translocation. Its function is as follows. Component of the F(0) channel, it forms part of the peripheral stalk, linking F(1) to F(0). The polypeptide is ATP synthase subunit b 2 (Picosynechococcus sp. (strain ATCC 27264 / PCC 7002 / PR-6) (Agmenellum quadruplicatum)).